The following is a 423-amino-acid chain: Enolase (423 aa).

Q164 lines the (2R)-2-phosphoglycerate pocket. Catalysis depends on E206, which acts as the Proton donor. 3 residues coordinate Mg(2+): D243, E289, and D316. The (2R)-2-phosphoglycerate site is built by K341, R370, S371, and K392. K341 (proton acceptor) is an active-site residue.

Belongs to the enolase family. Mg(2+) is required as a cofactor.

It localises to the cytoplasm. It is found in the secreted. Its subcellular location is the cell surface. It catalyses the reaction (2R)-2-phosphoglycerate = phosphoenolpyruvate + H2O. It participates in carbohydrate degradation; glycolysis; pyruvate from D-glyceraldehyde 3-phosphate: step 4/5. Its function is as follows. Catalyzes the reversible conversion of 2-phosphoglycerate (2-PG) into phosphoenolpyruvate (PEP). It is essential for the degradation of carbohydrates via glycolysis. This is Enolase from Desulfotalea psychrophila (strain LSv54 / DSM 12343).